The chain runs to 833 residues: Phosphatidylinositol-3-phosphatase myotubularin-2 (833 aa).

The 68-residue stretch at 42–109 folds into the GRAM domain; it reads GSYSNLDCLL…VAIEKFNKLA (68 aa). The region spanning 181–647 is the Myotubularin phosphatase domain; it reads TNPKERLLNE…LAPTLWPQFH (467 aa). Substrate contacts are provided by residues 329-332, 354-355, 440-446, and arginine 486; these read NGAK, NI, and CSDGWDR. Catalysis depends on cysteine 440, which acts as the Phosphocysteine intermediate. Positions 503–530 are disordered; it reads QSSSARSFPSSPVRQSPGSAAAQSSSSS. Positions 504 to 530 are enriched in low complexity; it reads SSSARSFPSSPVRQSPGSAAAQSSSSS. A coiled-coil region spans residues 660–717; the sequence is ETEDQCRAMTVKYSEMKKEKEEAERKVDELSSAMESLNEELLNERDISRAARESAKRA. The segment at 753 to 772 is disordered; the sequence is KCSHSIPQKQSEDNTTDVSE.

Belongs to the protein-tyrosine phosphatase family. Non-receptor class myotubularin subfamily. Mostly expressed in flowers and roots, and, to a lower extent, in siliques and leaves.

The protein resides in the cytoplasm. The catalysed reaction is a 1,2-diacyl-sn-glycero-3-phospho-(1D-myo-inositol-3-phosphate) + H2O = a 1,2-diacyl-sn-glycero-3-phospho-(1D-myo-inositol) + phosphate. It carries out the reaction a 1,2-diacyl-sn-glycero-3-phospho-(1D-myo-inositol-3,5-bisphosphate) + H2O = a 1,2-diacyl-sn-glycero-3-phospho-(1D-myo-inositol-5-phosphate) + phosphate. Functionally, phosphatase with phosphoinositide 3'-phosphatase activity that can use phosphatidylinositol-3-phosphate (PtdIns3P) and phosphatidylinositol-3,5-diphosphate (PtdIns3,5P(2)) as substrates and produces phosphatidylinositol-5-phosphate (PtdIns5P); participates in pathway(s) that transfer gene regulatory signals to the nucleus. The polypeptide is Phosphatidylinositol-3-phosphatase myotubularin-2 (MTM2) (Arabidopsis thaliana (Mouse-ear cress)).